A 126-amino-acid chain; its full sequence is Small nuclear ribonucleoprotein Sm D3 (126 aa).

Ser-2 is subject to N-acetylserine. The region spanning 5 to 77 (VPIKVLHEAE…IRFLILPDML (73 aa)) is the Sm domain. A run of 5 repeats spans residues 110–111 (RG), 112–113 (RG), 114–115 (RG), 116–117 (MG), and 118–119 (RG). The interval 110–119 (RGRGRGMGRG) is 5 X 2 AA tandem repeats of [RM]-G; required for interaction with SMN1.

It belongs to the snRNP core protein family. In terms of assembly, core component of the spliceosomal U1, U2, U4 and U5 small nuclear ribonucleoproteins (snRNPs), the building blocks of the spliceosome. Most spliceosomal snRNPs contain a common set of Sm proteins, SNRPB, SNRPD1, SNRPD2, SNRPD3, SNRPE, SNRPF and SNRPG that assemble in a heptameric protein ring on the Sm site of the small nuclear RNA to form the core snRNP. Component of the U1 snRNP. The U1 snRNP is composed of the U1 snRNA and the 7 core Sm proteins SNRPB, SNRPD1, SNRPD2, SNRPD3, SNRPE, SNRPF and SNRPG, and at least three U1 snRNP-specific proteins SNRNP70/U1-70K, SNRPA/U1-A and SNRPC/U1-C. Component of the U4/U6-U5 tri-snRNP complex composed of the U4, U6 and U5 snRNAs and at least PRPF3, PRPF4, PRPF6, PRPF8, PRPF31, SNRNP200, TXNL4A, SNRNP40, SNRPB, SNRPD1, SNRPD2, SNRPD3, SNRPE, SNRPF, SNRPG, DDX23, CD2BP2, PPIH, SNU13, EFTUD2, SART1 and USP39, plus LSM2, LSM3, LSM4, LSM5, LSM6, LSM7 and LSM8. Component of the U7 snRNP complex, or U7 Sm protein core complex, that is composed of the U7 snRNA and at least LSM10, LSM11, SNRPB, SNRPD3, SNRPE, SNRPF and SNRPG; the complex does not contain SNRPD1 and SNRPD2. Component of the minor spliceosome, which splices U12-type introns. Part of the SMN-Sm complex that contains SMN1, GEMIN2/SIP1, DDX20/GEMIN3, GEMIN4, GEMIN5, GEMIN6, GEMIN7, GEMIN8, STRAP/UNRIP and the Sm proteins SNRPB, SNRPD1, SNRPD2, SNRPD3, SNRPE, SNRPF and SNRPG; catalyzes core snRNPs assembly. Forms a 6S pICln-Sm complex composed of CLNS1A/pICln, SNRPD1, SNRPD2, SNRPE, SNRPF and SNRPG; ring-like structure where CLNS1A/pICln mimics additional Sm proteins and which is unable to assemble into the core snRNP. Interacts (via C-terminus) with SMN1 (via Tudor domain); the interaction is direct. Post-translationally, methylated on arginine residues by PRMT5 and PRMT7; probable asymmetric dimethylation which is required for assembly and biogenesis of snRNPs.

It is found in the cytoplasm. It localises to the cytosol. The protein localises to the nucleus. Its function is as follows. Plays a role in pre-mRNA splicing as a core component of the spliceosomal U1, U2, U4 and U5 small nuclear ribonucleoproteins (snRNPs), the building blocks of the spliceosome. Component of both the pre-catalytic spliceosome B complex and activated spliceosome C complexes. As a component of the minor spliceosome, involved in the splicing of U12-type introns in pre-mRNAs. As part of the U7 snRNP it is involved in histone pre-mRNA 3'-end processing. The chain is Small nuclear ribonucleoprotein Sm D3 (SNRPD3) from Homo sapiens (Human).